The following is a 568-amino-acid chain: MVLLHWCLLWLLFPLSSRTQKLPTRDEELFQMQIRDKAFFHDSSVIPDGAEISSYLFRDTPKRYFFVVEEDNTPLSVTVTPCDAPLEWKLSLQELPEDRSGEGSGDLEPLEQQKQQIINEEGTELFSYKGNDVEYFISSSSPSGLYQLDLLSTEKDTHFKVYATTTPESDQPYPELPYDPRVDVTSLGRTTVTLAWKPSPTASLLKQPIQYCVVINKEHNFKSLCAVEAKLSADDAFMMAPKPGLDFSPFDFAHFGFPSDNSGKERSFQAKPSPKLGRHVYSRPKVDIQKICIGNKNIFTVSDLKPDTQYYFDVFVVNINSNMSTAYVGTFARTKEEAKQKTVELKDGKITDVFVKRKGAKFLRFAPVSSHQKVTFFIHSCLDAVQIQVRRDGKLLLSQNVEGIQQFQLRGKPKAKYLVRLKGNKKGASMLKILATTRPTKQSFPSLPEDTRIKAFDKLRTCSSATVAWLGTQERNKFCIYKKEVDDNYNEDQKKREQNQCLGPDIRKKSEKVLCKYFHSQNLQKAVTTETIKGLQPGKSYLLDVYVIGHGGHSVKYQSKVVKTRKFC.

An N-terminal signal peptide occupies residues 1-19 (MVLLHWCLLWLLFPLSSRT). 2 consecutive Fibronectin type-III domains span residues 261–331 (NSGK…VGTF) and 445–564 (PSLP…VVKT). Asn-322 carries an N-linked (GlcNAc...) asparagine glycan.

In terms of assembly, binds heparin and chondroitin sulfate. Post-translationally, O-glycosylated; contains heparan sulfate and chondroitin sulfate. N-glycosylated. As to expression, expressed in neurons along the gonadotropin-releasing hormone (GnRH) expressing neurons migratory route.

It localises to the secreted. Its function is as follows. Secretory protein that plays a role in various cellular processes. Acts as a chemorepellent acting on gonadotropin-releasing hormone (GnRH) expressing neurons regulating their migration to the hypothalamus. Also promotes neuron migration, growth and survival as well as neurite outgrowth and is involved in the development of the olfactory system. May also act through the regulation of growth factors activity and downstream signaling. Also regulates extracellular matrix assembly and cell adhesiveness. Promotes endothelial cell survival, vessel formation and plays an important role in the process of revascularization through NOS3-dependent mechanisms. This Homo sapiens (Human) protein is Protein NDNF (NDNF).